Consider the following 370-residue polypeptide: Lipoyl synthase, mitochondrial (370 aa).

Residues Cys104, Cys109, Cys115, Cys135, Cys139, Cys142, and Ser350 each coordinate [4Fe-4S] cluster. In terms of domain architecture, Radical SAM core spans 118–339 (GGDKSKATAT…KQKALELGFL (222 aa)).

It belongs to the radical SAM superfamily. Lipoyl synthase family. [4Fe-4S] cluster serves as cofactor.

Its subcellular location is the mitochondrion. The catalysed reaction is [[Fe-S] cluster scaffold protein carrying a second [4Fe-4S](2+) cluster] + N(6)-octanoyl-L-lysyl-[protein] + 2 oxidized [2Fe-2S]-[ferredoxin] + 2 S-adenosyl-L-methionine + 4 H(+) = [[Fe-S] cluster scaffold protein] + N(6)-[(R)-dihydrolipoyl]-L-lysyl-[protein] + 4 Fe(3+) + 2 hydrogen sulfide + 2 5'-deoxyadenosine + 2 L-methionine + 2 reduced [2Fe-2S]-[ferredoxin]. The protein operates within protein modification; protein lipoylation via endogenous pathway; protein N(6)-(lipoyl)lysine from octanoyl-[acyl-carrier-protein]: step 2/2. Its function is as follows. Catalyzes the radical-mediated insertion of two sulfur atoms into the C-6 and C-8 positions of the octanoyl moiety bound to the lipoyl domains of lipoate-dependent enzymes, thereby converting the octanoylated domains into lipoylated derivatives. This Kluyveromyces lactis (strain ATCC 8585 / CBS 2359 / DSM 70799 / NBRC 1267 / NRRL Y-1140 / WM37) (Yeast) protein is Lipoyl synthase, mitochondrial.